The chain runs to 276 residues: Membrane protein insertase YidC 2 (276 aa).

The signal sequence occupies residues 1 to 22 (MGVKKKLKLTSLLGLSLLIMTA). Cys23 carries N-palmitoyl cysteine lipidation. Cys23 carries S-diacylglycerol cysteine lipidation. The next 4 helical transmembrane spans lie at 58–78 (ISIG…LLPV), 130–150 (SDSL…FQAL), 169–189 (VDTT…STWL), and 207–227 (GIPV…ALYW).

It belongs to the OXA1/ALB3/YidC family. Type 2 subfamily. In terms of assembly, interacts with KhpB (also called EloR/Jag).

The protein resides in the cell membrane. In terms of biological role, required for the insertion and/or proper folding and/or complex formation of integral membrane proteins into the membrane. Involved in integration of membrane proteins that insert both dependently and independently of the Sec translocase complex, as well as at least some lipoproteins. This is Membrane protein insertase YidC 2 from Streptococcus pneumoniae (strain ATCC BAA-255 / R6).